The chain runs to 715 residues: Polyribonucleotide nucleotidyltransferase (715 aa).

Mg(2+)-binding residues include D493 and D499. The 60-residue stretch at 560 to 619 (PRMITVKINPEKIRDVIGKGGSVIRALTEETGTTIDISDDGVVTIASTSSEGMAEAKKRI) folds into the KH domain. Residues 629–697 (GQVYEGTVLK…EKGRVRLSAK (69 aa)) form the S1 motif domain.

This sequence belongs to the polyribonucleotide nucleotidyltransferase family. The cofactor is Mg(2+).

The protein localises to the cytoplasm. The catalysed reaction is RNA(n+1) + phosphate = RNA(n) + a ribonucleoside 5'-diphosphate. Involved in mRNA degradation. Catalyzes the phosphorolysis of single-stranded polyribonucleotides processively in the 3'- to 5'-direction. In Burkholderia cenocepacia (strain HI2424), this protein is Polyribonucleotide nucleotidyltransferase.